The sequence spans 190 residues: Ubiquinol-cytochrome c reductase iron-sulfur subunit (190 aa).

The chain crosses the membrane as a helical span at residues 18–39 (FLYYATAGAGTVAAGAAAWTLV). In terms of domain architecture, Rieske spans 95 to 188 (GQLIDRSAQN…AEFLDDTTIK (94 aa)). Cys-132, His-134, Cys-152, and His-155 together coordinate [2Fe-2S] cluster. The cysteines at positions 137 and 154 are disulfide-linked.

It belongs to the Rieske iron-sulfur protein family. The main subunits of complex b-c1 are: cytochrome b, cytochrome c1 and the Rieske protein. [2Fe-2S] cluster is required as a cofactor.

It localises to the cell membrane. It carries out the reaction a quinol + 2 Fe(III)-[cytochrome c](out) = a quinone + 2 Fe(II)-[cytochrome c](out) + 2 H(+)(out). In terms of biological role, component of the ubiquinol-cytochrome c reductase complex (complex III or cytochrome b-c1 complex), which is a respiratory chain that generates an electrochemical potential coupled to ATP synthesis. The sequence is that of Ubiquinol-cytochrome c reductase iron-sulfur subunit (petA) from Paracoccus denitrificans.